A 116-amino-acid chain; its full sequence is Somatostatin (116 aa).

An N-terminal signal peptide occupies residues 1 to 24; the sequence is MLSCRLQCALAALSIVLALGGVTC. Residues 25–88 constitute a propeptide that is removed on maturation; sequence APSDPRLRQF…QDEMRLELQR (64 aa). Alanine amide is present on Ala43. A disordered region spans residues 62–99; sequence QTENDALEPEDLSQAAEQDEMRLELQRSANSNPAMAPR. Residues Cys105 and Cys116 are joined by a disulfide bond.

It belongs to the somatostatin family. C-terminal amidation of the neuronostatin peptide is required for its biological activity, including for the regulation of mean arterial pressure.

It is found in the secreted. Inhibits the secretion of pituitary hormones, including that of growth hormone/somatotropin (GH1), PRL, ACTH, luteinizing hormone (LH) and TSH. Also impairs ghrelin- and GnRH-stimulated secretion of GH1 and LH; the inhibition of ghrelin-stimulated secretion of GH1 can be further increased by neuronostatin. Its function is as follows. May enhance low-glucose-induced glucagon release by pancreatic alpha cells. This effect may be mediated by binding to GPR107 and PKA activation. May regulate cardiac contractile function. May compromise cardiomyocyte viability. In the central nervous system, may impair memory retention and may affect hippocampal excitability. May also have anxiolytic and anorexigenic effects. May play a role in arterial pressure regulation. May inhibit basal, but not ghrelin- or GnRH-stimulated secretion of GH1 or LH, but does not affect the release of other pituitary hormones, including PRL, ACTH, FSH or TSH. Potentiates inhibitory action of somatostatin on ghrelin-stimulated secretion of GH1, but not that on GnRH-stimulated secretion of LH. The sequence is that of Somatostatin (SST) from Canis lupus familiaris (Dog).